The chain runs to 944 residues: Protein translocase subunit SecA (944 aa).

Residues Q77, 95 to 99 (GEGKT), and D484 contribute to the ATP site. A disordered region spans residues 920–944 (EQEKQTRKKKKKKPHEDESSKTKIG). Basic and acidic residues predominate over residues 933-944 (PHEDESSKTKIG).

This sequence belongs to the SecA family. As to quaternary structure, monomer and homodimer. Part of the essential Sec protein translocation apparatus which comprises SecA, SecYEG and auxiliary proteins SecDF. Other proteins may also be involved.

The protein localises to the cell membrane. It localises to the cytoplasm. It catalyses the reaction ATP + H2O + cellular proteinSide 1 = ADP + phosphate + cellular proteinSide 2.. In terms of biological role, part of the Sec protein translocase complex. Interacts with the SecYEG preprotein conducting channel. Has a central role in coupling the hydrolysis of ATP to the transfer of proteins into and across the cell membrane, serving as an ATP-driven molecular motor driving the stepwise translocation of polypeptide chains across the membrane. This Mycoplasma mycoides subsp. mycoides SC (strain CCUG 32753 / NCTC 10114 / PG1) protein is Protein translocase subunit SecA.